The sequence spans 380 residues: Queuine tRNA-ribosyltransferase (380 aa).

Asp95 serves as the catalytic Proton acceptor. Residues 95 to 99 (DSGGF), Asp149, Gln192, and Gly219 each bind substrate. The RNA binding stretch occupies residues 250 to 256 (GVGSPDS). Asp269 acts as the Nucleophile in catalysis. An RNA binding; important for wobble base 34 recognition region spans residues 274–278 (TRIGR). Cys307, Cys309, Cys312, and His338 together coordinate Zn(2+).

The protein belongs to the queuine tRNA-ribosyltransferase family. As to quaternary structure, homodimer. Within each dimer, one monomer is responsible for RNA recognition and catalysis, while the other monomer binds to the replacement base PreQ1. Zn(2+) serves as cofactor.

The enzyme catalyses 7-aminomethyl-7-carbaguanine + guanosine(34) in tRNA = 7-aminomethyl-7-carbaguanosine(34) in tRNA + guanine. The protein operates within tRNA modification; tRNA-queuosine biosynthesis. Functionally, catalyzes the base-exchange of a guanine (G) residue with the queuine precursor 7-aminomethyl-7-deazaguanine (PreQ1) at position 34 (anticodon wobble position) in tRNAs with GU(N) anticodons (tRNA-Asp, -Asn, -His and -Tyr). Catalysis occurs through a double-displacement mechanism. The nucleophile active site attacks the C1' of nucleotide 34 to detach the guanine base from the RNA, forming a covalent enzyme-RNA intermediate. The proton acceptor active site deprotonates the incoming PreQ1, allowing a nucleophilic attack on the C1' of the ribose to form the product. After dissociation, two additional enzymatic reactions on the tRNA convert PreQ1 to queuine (Q), resulting in the hypermodified nucleoside queuosine (7-(((4,5-cis-dihydroxy-2-cyclopenten-1-yl)amino)methyl)-7-deazaguanosine). The protein is Queuine tRNA-ribosyltransferase of Geobacillus thermodenitrificans (strain NG80-2).